A 355-amino-acid chain; its full sequence is Peptide chain release factor 1 (355 aa).

Gln233 carries the post-translational modification N5-methylglutamine. The segment covering 281 to 293 (RRNKEQERADSRR) has biased composition (basic and acidic residues). Residues 281-308 (RRNKEQERADSRRGQIGSGDRSERIRTY) form a disordered region.

Belongs to the prokaryotic/mitochondrial release factor family. In terms of processing, methylated by PrmC. Methylation increases the termination efficiency of RF1.

The protein resides in the cytoplasm. Its function is as follows. Peptide chain release factor 1 directs the termination of translation in response to the peptide chain termination codons UAG and UAA. In Rickettsia akari (strain Hartford), this protein is Peptide chain release factor 1.